A 526-amino-acid chain; its full sequence is Chaperonin GroEL 2 (526 aa).

Residues Lys50, Gly413, and Asp494 each contribute to the ATP site.

This sequence belongs to the chaperonin (HSP60) family. Forms a cylinder of 14 subunits composed of two heptameric rings stacked back-to-back. Interacts with the co-chaperonin GroES.

The protein resides in the cytoplasm. It carries out the reaction ATP + H2O + a folded polypeptide = ADP + phosphate + an unfolded polypeptide.. Together with its co-chaperonin GroES, plays an essential role in assisting protein folding. The GroEL-GroES system forms a nano-cage that allows encapsulation of the non-native substrate proteins and provides a physical environment optimized to promote and accelerate protein folding. This chain is Chaperonin GroEL 2, found in Chlamydia pneumoniae (Chlamydophila pneumoniae).